Reading from the N-terminus, the 505-residue chain is DEAD-box ATP-dependent RNA helicase 38 (505 aa).

Residues 1–81 (MADGGKPPTP…DQGPPLLDDS (81 aa)) form a disordered region. Over residues 27 to 44 (KAAAAAEAASSSSSNEPA) the composition is skewed to low complexity. The Q motif motif lies at 100–129 (AAFEDLKLTPELLKGLHDEMGFSRPSKIQA). The 177-residue stretch at 134–310 (MILTPPYKDL…TRVIKDGNQI (177 aa)) folds into the Helicase ATP-binding domain. 147-154 (AHNGSGKT) contacts ATP. A DEAD box motif is present at residues 254–257 (DEAD). One can recognise a Helicase C-terminal domain in the interval 338-493 (VIKDKIFEFG…EVRNWQSEED (156 aa)).

It belongs to the DEAD box helicase family. DDX19/DBP5 subfamily.

The protein localises to the cytoplasm. It localises to the nucleus. The catalysed reaction is ATP + H2O = ADP + phosphate + H(+). Its function is as follows. ATP-dependent RNA helicase essential for mRNA export from the nucleus. Plays an important role in the positive regulation of CBF/DREB transcription factors. This is DEAD-box ATP-dependent RNA helicase 38 from Oryza sativa subsp. japonica (Rice).